Consider the following 345-residue polypeptide: L-erythro-3,5-diaminohexanoate dehydrogenase (345 aa).

This sequence belongs to the KDD family. In terms of assembly, homodimer.

The catalysed reaction is (3S,5S)-3,5-diaminohexanoate + NAD(+) + H2O = (5S)-5-amino-3-oxohexanoate + NH4(+) + NADH + H(+). It functions in the pathway amino-acid degradation; L-lysine degradation via acetate pathway. Involved in the anaerobic fermentation of lysine. Catalyzes the oxidative deamination of L-erythro-3,5-diaminohexanoate (3,5-DAH) to 3-keto-5-aminohexanoate (KAH). It can use NAD or NADP. This is L-erythro-3,5-diaminohexanoate dehydrogenase from Fusobacterium nucleatum subsp. nucleatum (strain ATCC 25586 / DSM 15643 / BCRC 10681 / CIP 101130 / JCM 8532 / KCTC 2640 / LMG 13131 / VPI 4355).